Reading from the N-terminus, the 317-residue chain is ATP synthase gamma chain (317 aa).

This sequence belongs to the ATPase gamma chain family. F-type ATPases have 2 components, CF(1) - the catalytic core - and CF(0) - the membrane proton channel. CF(1) has five subunits: alpha(3), beta(3), gamma(1), delta(1), epsilon(1). CF(0) has three main subunits: a, b and c.

The protein resides in the cellular thylakoid membrane. Functionally, produces ATP from ADP in the presence of a proton gradient across the membrane. The gamma chain is believed to be important in regulating ATPase activity and the flow of protons through the CF(0) complex. The sequence is that of ATP synthase gamma chain from Acaryochloris marina (strain MBIC 11017).